Reading from the N-terminus, the 62-residue chain is Large ribosomal subunit protein bL35 (62 aa).

A disordered region spans residues 31–62 (HLAQNKTTKQKRQSRKSAQMHSSDLKRFKALI). Residues 53 to 62 (SDLKRFKALI) show a composition bias toward basic and acidic residues.

This sequence belongs to the bacterial ribosomal protein bL35 family.

In Mycoplasmopsis agalactiae (strain NCTC 10123 / CIP 59.7 / PG2) (Mycoplasma agalactiae), this protein is Large ribosomal subunit protein bL35.